A 4981-amino-acid polypeptide reads, in one-letter code: Protocadherin Fat 4 (4981 aa).

An N-terminal signal peptide occupies residues 1–38; sequence MDLAPDRATGRPWLPLHTLSVSQLLRVFWLLSLLPGQA. Residues 39-4504 are Extracellular-facing; it reads WVHGAEPRQV…PEEISLPLWA (4466 aa). 34 Cadherin domains span residues 43-135, 136-250, 251-353, 359-475, 476-582, 584-689, 690-793, 794-893, 894-996, 997-1100, 1101-1210, 1211-1315, 1316-1420, 1421-1529, 1529-1629, 1630-1740, 1741-1841, 1842-1944, 1945-2051, 2051-2154, 2155-2259, 2260-2364, 2365-2466, 2467-2567, 2568-2669, 2670-2773, 2773-2872, 2873-2983, 2984-3089, 3090-3194, 3195-3298, 3299-3404, 3405-3510, and 3509-3620; these read AEPR…APVF, PDPS…PPVF, GSSH…DPVV, PATS…PPVF, SQQV…KPVF, QPEG…SPVF, YPVQ…PPVF, SQVA…SPHF, LQAI…SPVF, DQLS…RPLF, NSTN…APKF, LKDF…TPSF, PKST…PPSF, PPGD…VPMF, FISQ…GPVF, TQPK…PPVF, PTDM…TPKF, SRPV…PPIF, SLNS…PPTF, FLSP…NPIF, AQAL…VPVF, ELSP…VPTF, ASKA…PPRF, QHHP…FPKV, RAKE…APIF, KEDP…APRF, FSQI…APRF, SRTS…APQF, LKSK…TPEF, SQSH…SPVF, LSDD…VPRF, VSKL…PPIF, TLNI…GPML, and MLTV…VEIF. N84 and N237 each carry an N-linked (GlcNAc...) asparagine glycan. Residues N393, N416, N435, N483, N551, N615, N676, N721, N825, N880, N946, N1085, N1101, N1104, N1225, N1296, N1389, and N1514 are each glycosylated (N-linked (GlcNAc...) asparagine). N-linked (GlcNAc...) asparagine glycosylation is found at N1828, N1899, N1967, and N2119. N2387 and N2430 each carry an N-linked (GlcNAc...) asparagine glycan. N2921, N2937, N3036, N3140, N3217, N3392, and N3477 each carry an N-linked (GlcNAc...) asparagine glycan. N-linked (GlcNAc...) asparagine glycosylation is found at N3706 and N3758. The region spanning 3802–3860 is the EGF-like 1 domain; sequence DHDSCVHGPCQNGGSCLRRLAVSSVLKSRESLPVIIVANEPLQPFLCKCLPGYAGSWCE. 12 disulfides stabilise this stretch: C3806–C3817, C3811–C3848, C3850–C3859, C3866–C3877, C3871–C3886, C3888–C3897, C3904–C3915, C3909–C3924, C3926–C3935, C3942–C3953, C3947–C3962, and C3964–C3973. An EGF-like 2; calcium-binding domain is found at 3862-3898; it reads DIDECLPSPCHSGGTCHNLVGGFSCSCPDGFTGRACE. The region spanning 3900 to 3936 is the EGF-like 3; calcium-binding domain; that stretch reads DINECLQSPCKNGAICQNFPGSFNCVCKTGYTGKMCE. One can recognise an EGF-like 4 domain in the interval 3938–3974; sequence SVNYCECNPCFNGGSCQSGVDSYYCHCPFGVFGKHCE. The Laminin G-like 1 domain maps to 3975 to 4159; the sequence is LNSYGFEELS…LAAQGILDQC (185 aa). The N-linked (GlcNAc...) asparagine glycan is linked to N4017. 4 cysteine pairs are disulfide-bonded: C4133/C4159, C4166/C4177, C4171/C4186, and C4188/C4197. In terms of domain architecture, EGF-like 5 spans 4162 to 4198; sequence LEGACTRSPCQHGGTCMDYWSWQQCHCKEGLTGKYCE. Residues 4217–4398 enclose the Laminin G-like 2 domain; it reads YHMSQNEKRE…KTDPSVKIGC (182 aa). 2 N-linked (GlcNAc...) asparagine glycosylation sites follow: N4267 and N4312. Intrachain disulfides connect C4365–C4398, C4430–C4441, C4435–C4451, and C4453–C4462. In terms of domain architecture, EGF-like 6 spans 4426-4463; the sequence is PPGDCASHPCQNGGSCEPGLHSGFTCSCPDSHTGRTCE. Residues 4505–4525 traverse the membrane as a helical segment; sequence VPAIVGSCATVLALLVLSLIL. Topologically, residues 4526–4981 are cytoplasmic; sequence CNQCRGKKAK…PKDGEAEQYV (456 aa). 5 disordered regions span residues 4534–4584, 4680–4713, 4752–4856, 4869–4911, and 4957–4981; these read AKNP…PDII, QGLR…STFY, RSKS…MEYD, KLSQ…AAPG, and AAAN…EQYV. Over residues 4680 to 4699 the composition is skewed to polar residues; it reads QGLRTSSLSHSACPTPNPLS. Positions 4706-4795 are necessary and sufficient for interaction with MPDZ; the sequence is FSKSSTFYRN…GLSIEEVERL (90 aa). Positions 4809–4821 are enriched in basic and acidic residues; that stretch reads DHGRSSSEEDCRR. Position 4876 is a phosphoserine (S4876). Residues 4971–4981 show a composition bias toward basic and acidic residues; it reads VPKDGEAEQYV.

Heterophilic interaction with DCHS1; this interaction affects their respective protein levels. Interacts (via cytoplasmic domain) with MPDZ. Forms a complex with PALS1 and MPDZ. As to expression, widely expressed. Expressed in fetal brain, infant brain, brain tumor and colorectal cancer.

The protein resides in the membrane. Cadherins are calcium-dependent cell adhesion proteins. FAT4 plays a role in the maintenance of planar cell polarity as well as in inhibition of YAP1-mediated neuroprogenitor cell proliferation and differentiation. The protein is Protocadherin Fat 4 (FAT4) of Homo sapiens (Human).